We begin with the raw amino-acid sequence, 493 residues long: Proline--tRNA ligase (493 aa).

This sequence belongs to the class-II aminoacyl-tRNA synthetase family. ProS type 3 subfamily. As to quaternary structure, homodimer.

Its subcellular location is the cytoplasm. It carries out the reaction tRNA(Pro) + L-proline + ATP = L-prolyl-tRNA(Pro) + AMP + diphosphate. Catalyzes the attachment of proline to tRNA(Pro) in a two-step reaction: proline is first activated by ATP to form Pro-AMP and then transferred to the acceptor end of tRNA(Pro). In Azobacteroides pseudotrichonymphae genomovar. CFP2, this protein is Proline--tRNA ligase.